A 161-amino-acid chain; its full sequence is Large ribosomal subunit protein uL23m (161 aa).

The transit peptide at Met1–Val34 directs the protein to the mitochondrion.

Belongs to the universal ribosomal protein uL23 family. In terms of assembly, component of the mitochondrial large ribosomal subunit (mt-LSU). Mature yeast 74S mitochondrial ribosomes consist of a small (37S) and a large (54S) subunit. The 37S small subunit contains a 15S ribosomal RNA (15S mt-rRNA) and at least 32 different proteins. The 54S large subunit contains a 21S rRNA (21S mt-rRNA) and at least 45 different proteins. uL23m forms the wall of the exit tunnel. Interacts with the C-terminus of OXA1.

Its subcellular location is the mitochondrion. In terms of biological role, component of the mitochondrial ribosome (mitoribosome), a dedicated translation machinery responsible for the synthesis of mitochondrial genome-encoded proteins, including at least some of the essential transmembrane subunits of the mitochondrial respiratory chain. The mitoribosomes are attached to the mitochondrial inner membrane and translation products are cotranslationally integrated into the membrane. The sequence is that of Large ribosomal subunit protein uL23m (mrp20) from Schizosaccharomyces pombe (strain 972 / ATCC 24843) (Fission yeast).